The primary structure comprises 264 residues: Thiazole synthase (264 aa).

The active-site Schiff-base intermediate with DXP is Lys98. Residues Gly159, 185–186 (AG), and 207–208 (AS) each bind 1-deoxy-D-xylulose 5-phosphate.

It belongs to the ThiG family. As to quaternary structure, homotetramer. Forms heterodimers with either ThiH or ThiS.

It localises to the cytoplasm. The enzyme catalyses [ThiS sulfur-carrier protein]-C-terminal-Gly-aminoethanethioate + 2-iminoacetate + 1-deoxy-D-xylulose 5-phosphate = [ThiS sulfur-carrier protein]-C-terminal Gly-Gly + 2-[(2R,5Z)-2-carboxy-4-methylthiazol-5(2H)-ylidene]ethyl phosphate + 2 H2O + H(+). It functions in the pathway cofactor biosynthesis; thiamine diphosphate biosynthesis. Its function is as follows. Catalyzes the rearrangement of 1-deoxy-D-xylulose 5-phosphate (DXP) to produce the thiazole phosphate moiety of thiamine. Sulfur is provided by the thiocarboxylate moiety of the carrier protein ThiS. In vitro, sulfur can be provided by H(2)S. This chain is Thiazole synthase, found in Streptomyces griseus subsp. griseus (strain JCM 4626 / CBS 651.72 / NBRC 13350 / KCC S-0626 / ISP 5235).